A 266-amino-acid polypeptide reads, in one-letter code: Endoplasmic reticulum vesicle protein 25 (266 aa).

Residues 1–26 (MGSSPQSSTRTLLGLLFLLLVQLSSA) form the signal peptide. At 27 to 188 (LKFDLHASSG…TNESTNERVK (162 aa)) the chain is on the lumenal side. The region spanning 39–129 (ERCIRNFVFK…YKSVELDVEI (91 aa)) is the GOLD domain. Residues 189–209 (WFAFGTMGMLVGLGVWQVVYL) traverse the membrane as a helical segment. Over 210–266 (RAYFRYVDFPVSWRVDGVVANCCSCCEQVEASYLRSSRVVFWSPLVMWTRLSWLILR) the chain is Cytoplasmic.

It belongs to the EMP24/GP25L family.

It is found in the endoplasmic reticulum membrane. The protein localises to the golgi apparatus membrane. In terms of biological role, constituent of COPII-coated endoplasmic reticulum-derived transport vesicles. Required for efficient transport of a subset of secretory proteins to the Golgi. Facilitates retrograde transport from the Golgi to the endoplasmic reticulum. This Aspergillus fumigatus (strain ATCC MYA-4609 / CBS 101355 / FGSC A1100 / Af293) (Neosartorya fumigata) protein is Endoplasmic reticulum vesicle protein 25 (erv25).